Reading from the N-terminus, the 88-residue chain is Small ribosomal subunit protein bS20 (88 aa).

A disordered region spans residues 1–27 (MANTASAKKMTRKIAKRTAINRSRRSR).

The protein belongs to the bacterial ribosomal protein bS20 family.

In terms of biological role, binds directly to 16S ribosomal RNA. The protein is Small ribosomal subunit protein bS20 of Methylobacterium radiotolerans (strain ATCC 27329 / DSM 1819 / JCM 2831 / NBRC 15690 / NCIMB 10815 / 0-1).